Here is a 64-residue protein sequence, read N- to C-terminus: Conotoxin mr5.1a (64 aa).

The N-terminal stretch at 1-19 (MRCVPVFVILLLLIASAPS) is a signal peptide. The propeptide occupies 20–48 (VDARLKTKDDMPLPSSHANIKRTLQIHRN). Glutamate 60 carries the post-translational modification 4-carboxyglutamate.

Belongs to the conotoxin T superfamily. Post-translationally, contains 2 disulfide bonds that can be either 'C1-C3, C2-C4' or 'C1-C4, C2-C3', since these disulfide connectivities have been observed for conotoxins with cysteine framework V (for examples, see AC P0DQQ7 and AC P81755). As to expression, expressed by the venom duct.

Its subcellular location is the secreted. The sequence is that of Conotoxin mr5.1a from Conus marmoreus (Marble cone).